A 95-amino-acid polypeptide reads, in one-letter code: Aspartyl/glutamyl-tRNA(Asn/Gln) amidotransferase subunit C (95 aa).

Belongs to the GatC family. Heterotrimer of A, B and C subunits.

The enzyme catalyses L-glutamyl-tRNA(Gln) + L-glutamine + ATP + H2O = L-glutaminyl-tRNA(Gln) + L-glutamate + ADP + phosphate + H(+). The catalysed reaction is L-aspartyl-tRNA(Asn) + L-glutamine + ATP + H2O = L-asparaginyl-tRNA(Asn) + L-glutamate + ADP + phosphate + 2 H(+). Its function is as follows. Allows the formation of correctly charged Asn-tRNA(Asn) or Gln-tRNA(Gln) through the transamidation of misacylated Asp-tRNA(Asn) or Glu-tRNA(Gln) in organisms which lack either or both of asparaginyl-tRNA or glutaminyl-tRNA synthetases. The reaction takes place in the presence of glutamine and ATP through an activated phospho-Asp-tRNA(Asn) or phospho-Glu-tRNA(Gln). The protein is Aspartyl/glutamyl-tRNA(Asn/Gln) amidotransferase subunit C of Bradyrhizobium diazoefficiens (strain JCM 10833 / BCRC 13528 / IAM 13628 / NBRC 14792 / USDA 110).